Consider the following 364-residue polypeptide: Protein leg1a (364 aa).

The signal sequence occupies residues 1–22 (MSEMGFLRSVAAVLLLAVFSHA). N-linked (GlcNAc...) asparagine glycosylation is present at Asn70.

Belongs to the LEG1 family. In terms of tissue distribution, detected in all tissues tested, with the highest levels in serum (at protein level). At mRNA level, only expressed in liver.

Its subcellular location is the secreted. Functionally, important for early development of liver, exocrine pancreas and intestine, probably through cell cycle regulation. In liver, its function is partially redundant with leg1b function. This chain is Protein leg1a, found in Danio rerio (Zebrafish).